We begin with the raw amino-acid sequence, 357 residues long: MANLTDLVNLNLSDCSDKIIAEYIWVGGSGIDLRSKARTVKGPITDVSQLPKWNYDGSSTGQAPGEDSEVILYPQAIFKDPFRRGDNILVMCDCYTPQGEPIPTNKRHSAAKIFSHPDVVAEVPWYGIEQEYTLLQKDVNWPLGWPVGGFPGPQGPYYCAAGAEKAFGRDIVDAHYKACIYAGINISGINGEVMPGQWEFQVGPSVGIAAADQVWVARYILERVTEVAGVVLSLDPKPIPGDWNGAGAHTNFSTKSMREPGGYEVIKKAIDKLALRHKEHIAAYGEGNERRLTGRHETADINTFKWGVANRGASIRVGRDTEKEGKGYFEDRRPASNMDPYVVTGMIAETTLLWKQN.

Residues 19–99 (IIAEYIWVGG…VMCDCYTPQG (81 aa)) form the GS beta-grasp domain. The region spanning 106–357 (KRHSAAKIFS…AETTLLWKQN (252 aa)) is the GS catalytic domain.

This sequence belongs to the glutamine synthetase family. As to quaternary structure, homooctamer. In terms of tissue distribution, expressed in roots and at lower levels in leaf blades and spikelets (rice flower).

Its subcellular location is the cytoplasm. The catalysed reaction is L-glutamate + NH4(+) + ATP = L-glutamine + ADP + phosphate + H(+). Functionally, high-affinity glutamine synthetase involved in ammonium assimilation. Plays an important role in the primary assimilation of ammonium taken up by roots. Plays a role in maintaining nitrogen metabolic balance during ammonium assimilation, thus controlling plant growth and development. Reassimilates ammonium generated during lignification within developing tillers, which is probably required for the outgrowth of axillary buds. Required for nitrogen-dependent biosynthesis of cytokinin. Active cytokinin in axillary bud meristem is required for axillary bud outgrowth and necessary for tillering. The polypeptide is Glutamine synthetase cytosolic isozyme 1-2 (Oryza sativa subsp. japonica (Rice)).